Here is a 188-residue protein sequence, read N- to C-terminus: Elongation factor P (188 aa).

This sequence belongs to the elongation factor P family.

The protein resides in the cytoplasm. It functions in the pathway protein biosynthesis; polypeptide chain elongation. In terms of biological role, involved in peptide bond synthesis. Stimulates efficient translation and peptide-bond synthesis on native or reconstituted 70S ribosomes in vitro. Probably functions indirectly by altering the affinity of the ribosome for aminoacyl-tRNA, thus increasing their reactivity as acceptors for peptidyl transferase. In Nitrobacter hamburgensis (strain DSM 10229 / NCIMB 13809 / X14), this protein is Elongation factor P.